The chain runs to 229 residues: DNA mismatch repair protein MutH (229 aa).

The protein belongs to the MutH family.

Its subcellular location is the cytoplasm. In terms of biological role, sequence-specific endonuclease that cleaves unmethylated GATC sequences. It is involved in DNA mismatch repair. In Shigella boydii serotype 18 (strain CDC 3083-94 / BS512), this protein is DNA mismatch repair protein MutH.